The sequence spans 176 residues: NAD(P)H-quinone oxidoreductase subunit 6, chloroplastic (176 aa).

5 consecutive transmembrane segments (helical) span residues 10–30 (FLLV…VLLT), 32–52 (PIYS…LYIL), 61–81 (AQLL…VMFM), 92–112 (LWTV…GLLI), and 152–172 (FFLP…GAIT).

This sequence belongs to the complex I subunit 6 family. NDH is composed of at least 16 different subunits, 5 of which are encoded in the nucleus.

Its subcellular location is the plastid. The protein resides in the chloroplast thylakoid membrane. It catalyses the reaction a plastoquinone + NADH + (n+1) H(+)(in) = a plastoquinol + NAD(+) + n H(+)(out). The catalysed reaction is a plastoquinone + NADPH + (n+1) H(+)(in) = a plastoquinol + NADP(+) + n H(+)(out). NDH shuttles electrons from NAD(P)H:plastoquinone, via FMN and iron-sulfur (Fe-S) centers, to quinones in the photosynthetic chain and possibly in a chloroplast respiratory chain. The immediate electron acceptor for the enzyme in this species is believed to be plastoquinone. Couples the redox reaction to proton translocation, and thus conserves the redox energy in a proton gradient. This is NAD(P)H-quinone oxidoreductase subunit 6, chloroplastic (ndhG) from Morus indica (Mulberry).